A 196-amino-acid chain; its full sequence is Probable cobalt-precorrin-6B C(15)-methyltransferase (decarboxylating) (196 aa).

Residues threonine 24, 48-52, aspartate 72, and alanine 101 contribute to the S-adenosyl-L-methionine site; that span reads GCGTG.

This sequence belongs to the methyltransferase superfamily. Archaeal-type CbiT family.

It catalyses the reaction Co-precorrin-6B + S-adenosyl-L-methionine = Co-precorrin-7 + S-adenosyl-L-homocysteine + CO2. It functions in the pathway cofactor biosynthesis; adenosylcobalamin biosynthesis; cob(II)yrinate a,c-diamide from sirohydrochlorin (anaerobic route): step 8/10. Its function is as follows. Catalyzes the methylation of C-15 in cobalt-precorrin-6B followed by the decarboxylation of C-12 to form cobalt-precorrin-7. In Pyrobaculum aerophilum (strain ATCC 51768 / DSM 7523 / JCM 9630 / CIP 104966 / NBRC 100827 / IM2), this protein is Probable cobalt-precorrin-6B C(15)-methyltransferase (decarboxylating).